The sequence spans 270 residues: Acyl-[acyl-carrier-protein]--UDP-N-acetylglucosamine O-acyltransferase (270 aa).

Residues 69-72 (QDLK), His121, His140, and Gln157 contribute to the substrate site.

This sequence belongs to the transferase hexapeptide repeat family. LpxA subfamily. In terms of assembly, homotrimer.

It is found in the cytoplasm. It carries out the reaction a (3R)-hydroxyacyl-[ACP] + UDP-N-acetyl-alpha-D-glucosamine = a UDP-3-O-[(3R)-3-hydroxyacyl]-N-acetyl-alpha-D-glucosamine + holo-[ACP]. The protein operates within glycolipid biosynthesis; lipid IV(A) biosynthesis; lipid IV(A) from (3R)-3-hydroxytetradecanoyl-[acyl-carrier-protein] and UDP-N-acetyl-alpha-D-glucosamine: step 1/6. Its function is as follows. Involved in the biosynthesis of lipid A, a phosphorylated glycolipid that anchors the lipopolysaccharide to the outer membrane of the cell. This Helicobacter pylori (strain ATCC 700392 / 26695) (Campylobacter pylori) protein is Acyl-[acyl-carrier-protein]--UDP-N-acetylglucosamine O-acyltransferase.